A 500-amino-acid polypeptide reads, in one-letter code: Aspartyl/glutamyl-tRNA(Asn/Gln) amidotransferase subunit B (500 aa).

Belongs to the GatB/GatE family. GatB subfamily. Heterotrimer of A, B and C subunits.

It carries out the reaction L-glutamyl-tRNA(Gln) + L-glutamine + ATP + H2O = L-glutaminyl-tRNA(Gln) + L-glutamate + ADP + phosphate + H(+). The enzyme catalyses L-aspartyl-tRNA(Asn) + L-glutamine + ATP + H2O = L-asparaginyl-tRNA(Asn) + L-glutamate + ADP + phosphate + 2 H(+). Allows the formation of correctly charged Asn-tRNA(Asn) or Gln-tRNA(Gln) through the transamidation of misacylated Asp-tRNA(Asn) or Glu-tRNA(Gln) in organisms which lack either or both of asparaginyl-tRNA or glutaminyl-tRNA synthetases. The reaction takes place in the presence of glutamine and ATP through an activated phospho-Asp-tRNA(Asn) or phospho-Glu-tRNA(Gln). The protein is Aspartyl/glutamyl-tRNA(Asn/Gln) amidotransferase subunit B of Brucella ovis (strain ATCC 25840 / 63/290 / NCTC 10512).